Consider the following 268-residue polypeptide: Zygote formation protein zyg1 (268 aa).

Plays an essential role in zygote formation by inducing sexual cell fusion. Overexpressing cells eventually formed many loose mounds, in which giant multinucleate cells were surrounded by normal-sized cells. This chain is Zygote formation protein zyg1 (zyg1), found in Dictyostelium mucoroides (Slime mold).